The sequence spans 47 residues: Gene 60 protein (47 aa).

The protein is Gene 60 protein (60) of Mycobacterium phage L5 (Mycobacteriophage L5).